The sequence spans 219 residues: MSNQQALVIFSGGQDSTTCLIQAIQTYGRENVQAITFQYGQRHAVELERARWIAQDLGVKQTVLDLSLMRQITHNALMDDTAAIETAENGVPNTFVDGRNALFLLYAAIYAKGQGIRHIIAGVCETDFSGYPDCRDVFVKSMNVTLNLAMDYDFQIHTPLMYLTKAQTWALADEMGVLDYIREQTHTCYNGIVGGCRECPSCILRERGLAEYLESKKAV.

10–20 (FSGGQDSTTCL) is an ATP binding site. Zn(2+) is bound by residues Cys-188, Cys-196, Cys-199, and Cys-202.

This sequence belongs to the QueC family. It depends on Zn(2+) as a cofactor.

It carries out the reaction 7-carboxy-7-deazaguanine + NH4(+) + ATP = 7-cyano-7-deazaguanine + ADP + phosphate + H2O + H(+). Its pathway is purine metabolism; 7-cyano-7-deazaguanine biosynthesis. Functionally, catalyzes the ATP-dependent conversion of 7-carboxy-7-deazaguanine (CDG) to 7-cyano-7-deazaguanine (preQ(0)). The protein is 7-cyano-7-deazaguanine synthase of Neisseria meningitidis serogroup B (strain ATCC BAA-335 / MC58).